A 212-amino-acid polypeptide reads, in one-letter code: Thymidylate kinase (212 aa).

10 to 17 (GGEGSGKT) is an ATP binding site.

It belongs to the thymidylate kinase family.

The catalysed reaction is dTMP + ATP = dTDP + ADP. Functionally, phosphorylation of dTMP to form dTDP in both de novo and salvage pathways of dTTP synthesis. This chain is Thymidylate kinase, found in Marinomonas sp. (strain MWYL1).